Here is a 271-residue protein sequence, read N- to C-terminus: MTLTKRIIPCIDVDVDENGDAAVYTGVNFEDLEYTGDPVEMAKAYNESGADEFVFLDITASAEGRETMLDTVSAVADEVFIPLTVGGGIRTRADIKETLRAGADKVSINSGAIAEPDLINEGAAAFGSQCIVISVDARRRFDSEGEHYTEVDGESCWFECTVKGGREGTGLDVIEWATEAEERGAGELFVNSIDADGTKDGYDIPLMKAVCDTVSTPVIASSGCGSPEDMEEVFVDAGADAGLAASIFHFGEYSIAETKEYLDSKGIPVRL.

Active-site residues include Asp-12 and Asp-136.

This sequence belongs to the HisA/HisF family. Heterodimer of HisH and HisF.

It localises to the cytoplasm. It carries out the reaction 5-[(5-phospho-1-deoxy-D-ribulos-1-ylimino)methylamino]-1-(5-phospho-beta-D-ribosyl)imidazole-4-carboxamide + L-glutamine = D-erythro-1-(imidazol-4-yl)glycerol 3-phosphate + 5-amino-1-(5-phospho-beta-D-ribosyl)imidazole-4-carboxamide + L-glutamate + H(+). It participates in amino-acid biosynthesis; L-histidine biosynthesis; L-histidine from 5-phospho-alpha-D-ribose 1-diphosphate: step 5/9. In terms of biological role, IGPS catalyzes the conversion of PRFAR and glutamine to IGP, AICAR and glutamate. The HisF subunit catalyzes the cyclization activity that produces IGP and AICAR from PRFAR using the ammonia provided by the HisH subunit. This Haloarcula marismortui (strain ATCC 43049 / DSM 3752 / JCM 8966 / VKM B-1809) (Halobacterium marismortui) protein is Imidazole glycerol phosphate synthase subunit HisF.